The primary structure comprises 281 residues: Insecticidal crystal toxin protein (281 aa).

9 antigenic epitope regions span residues 54–78 (NYSHILSFIKSLSIPATYKTQVYTF), 91–104 (IYTHLTTQIPAVKA), 108–116 (GTASKVVQG), 131–148 (FKITCQHSNFQQSYFIRI), 160–172 (AVINLSIPGVAEL), 189–196 (KYKDFQYL), 208–216 (QNISLVFNR), 221–236 (TNTTVLIDKIEFLPIT), and 247–256 (KLETVQQIIN).

This sequence belongs to the delta endotoxin family.

Functionally, promotes colloidosmotic lysis by binding to the midgut epithelial cells of insects. Active against Mamestra brassicae. The protein is Insecticidal crystal toxin protein of Bacillus thuringiensis subsp. kurstaki.